A 229-amino-acid polypeptide reads, in one-letter code: Orotidine 5'-phosphate decarboxylase (229 aa).

Residues Asp-10, Lys-32, 59–68 (DLKFHDIPNT), Thr-119, Arg-180, Gln-189, Gly-209, and Arg-210 each bind substrate. Residue Lys-61 is the Proton donor of the active site.

This sequence belongs to the OMP decarboxylase family. Type 1 subfamily. Homodimer.

It catalyses the reaction orotidine 5'-phosphate + H(+) = UMP + CO2. It participates in pyrimidine metabolism; UMP biosynthesis via de novo pathway; UMP from orotate: step 2/2. Functionally, catalyzes the decarboxylation of orotidine 5'-monophosphate (OMP) to uridine 5'-monophosphate (UMP). The polypeptide is Orotidine 5'-phosphate decarboxylase (Legionella pneumophila (strain Paris)).